A 131-amino-acid polypeptide reads, in one-letter code: Holo-[acyl-carrier-protein] synthase (131 aa).

2 residues coordinate Mg(2+): aspartate 8 and glutamate 59.

This sequence belongs to the P-Pant transferase superfamily. AcpS family. It depends on Mg(2+) as a cofactor.

It is found in the cytoplasm. It catalyses the reaction apo-[ACP] + CoA = holo-[ACP] + adenosine 3',5'-bisphosphate + H(+). In terms of biological role, transfers the 4'-phosphopantetheine moiety from coenzyme A to a Ser of acyl-carrier-protein. This chain is Holo-[acyl-carrier-protein] synthase, found in Orientia tsutsugamushi (strain Ikeda) (Rickettsia tsutsugamushi).